Here is a 451-residue protein sequence, read N- to C-terminus: Chromosomal replication initiator protein DnaA (451 aa).

The interval Met1 to Arg72 is domain I, interacts with DnaA modulators. Residues Arg72 to His108 are domain II. Residues Met109–Ser325 form a domain III, AAA+ region region. ATP is bound by residues Gly153, Gly155, Lys156, and Thr157. The interval Ser326–Phe451 is domain IV, binds dsDNA.

This sequence belongs to the DnaA family. As to quaternary structure, oligomerizes as a right-handed, spiral filament on DNA at oriC.

It is found in the cytoplasm. Plays an essential role in the initiation and regulation of chromosomal replication. ATP-DnaA binds to the origin of replication (oriC) to initiate formation of the DNA replication initiation complex once per cell cycle. Binds the DnaA box (a 9 base pair repeat at the origin) and separates the double-stranded (ds)DNA. Forms a right-handed helical filament on oriC DNA; dsDNA binds to the exterior of the filament while single-stranded (ss)DNA is stabiized in the filament's interior. The ATP-DnaA-oriC complex binds and stabilizes one strand of the AT-rich DNA unwinding element (DUE), permitting loading of DNA polymerase. After initiation quickly degrades to an ADP-DnaA complex that is not apt for DNA replication. Binds acidic phospholipids. This is Chromosomal replication initiator protein DnaA from Listeria welshimeri serovar 6b (strain ATCC 35897 / DSM 20650 / CCUG 15529 / CIP 8149 / NCTC 11857 / SLCC 5334 / V8).